We begin with the raw amino-acid sequence, 508 residues long: Probable protein kinase UbiB (508 aa).

A Protein kinase domain is found at aspartate 118–leucine 494. ATP-binding positions include valine 124–valine 132 and lysine 151. Residue aspartate 286 is the Proton acceptor of the active site. Residues glutamine 488 to leucine 508 form a helical membrane-spanning segment.

It belongs to the ABC1 family. UbiB subfamily.

It is found in the cell inner membrane. Its pathway is cofactor biosynthesis; ubiquinone biosynthesis [regulation]. Its function is as follows. Is probably a protein kinase regulator of UbiI activity which is involved in aerobic coenzyme Q (ubiquinone) biosynthesis. In Chromobacterium violaceum (strain ATCC 12472 / DSM 30191 / JCM 1249 / CCUG 213 / NBRC 12614 / NCIMB 9131 / NCTC 9757 / MK), this protein is Probable protein kinase UbiB.